The following is a 214-amino-acid chain: MKFFIDTADVNEIREAHELGLVDGVTTNPSLIAKSGRKFEEVIKEITGIVDGPISAEVVSLDHDGMIREAEELAAIHKNIVIKLPMTPEGLKACTTLTKKGIKTNVTLIFTAMQALLAAKAGATYVSPFVGRLDDISQDGMGIIDDIKTIFDNYGYTAEIIVASVRNPIHVLNAALIGADIATIPYSVMLQLAKHPLTDAGIERFLKDWEKVPK.

K83 (schiff-base intermediate with substrate) is an active-site residue.

The protein belongs to the transaldolase family. Type 3B subfamily.

The protein resides in the cytoplasm. The catalysed reaction is D-sedoheptulose 7-phosphate + D-glyceraldehyde 3-phosphate = D-erythrose 4-phosphate + beta-D-fructose 6-phosphate. The protein operates within carbohydrate degradation; pentose phosphate pathway; D-glyceraldehyde 3-phosphate and beta-D-fructose 6-phosphate from D-ribose 5-phosphate and D-xylulose 5-phosphate (non-oxidative stage): step 2/3. In terms of biological role, transaldolase is important for the balance of metabolites in the pentose-phosphate pathway. This chain is Probable transaldolase, found in Geobacter metallireducens (strain ATCC 53774 / DSM 7210 / GS-15).